The chain runs to 182 residues: Neuropeptide CCHamide-1 (182 aa).

Residues 1-22 (MWYSKCSWTLVVLVALFALVTG) form the signal peptide. C24 and C31 are disulfide-bonded. Position 35 is a histidine amide (H35). Residues 39–182 (SGGKAVIDAK…ENYSGYELTK (144 aa)) constitute a propeptide that is removed on maturation. Disordered stretches follow at residues 67–103 (NNNN…AAPA) and 133–154 (QLQD…DAAA). The segment covering 87-103 (RNTNANSANNIPLAAPA) has biased composition (low complexity). Residue N174 is glycosylated (N-linked (GlcNAc...) asparagine).

As to expression, expressed in endocrine cells of the larval midgut (at protein level). In the brain, expressed in the optic lobes, lateral protocerebrum, subesophageal ganglion, and intermediate and superior medial protocerebrum (at protein level). Expressed in DN1a neurons but not in other clock neurons and expression follows a rhythmic pattern controlled by the circadian clock (at protein level). In the posterior midgut, expressed in enteroendocrine cells (at protein level). Low levels in larval brain with higher levels in larval and adult gut and adult brain.

It is found in the secreted. Functionally, neuropeptide ligand for the CCHamide-1 receptor CCHa1-R. Neuromessenger mediating signaling between neuronal cells of the circadian clock network involved in regulation of sleep latency (the time required to fall asleep), amount of sleep and depth of sleep (arousability). Together with PDF, involved in regulating intensity and periodicity of daytime activity. In subsets of clock neurons modulates the rhythmic expression of PDP1 and PDF, and together with PDF modulates the rhythmic expression of circadian protein PER/period, but not TIM/timeless. Mediates signaling from DN1a (anterior dorsal neurons 1) clock neurons to s-LNv (small ventral lateral neurons) clock neurons through CCHa1-R, contributing to regulation of activity rhythms by the circadian clock, particularly in the morning. May be involved in signaling between clock neurons and non-clock neurons, such as the fan-shaped body, involved in sleep homeostasis. In response to a high protein diet mediates hormonal signaling between the gut and a CCHa1-R expressing subset of dopaminergic cells in the protocerebral anterior medial (PAM) cluster of the brain. This suppresses arousability by mechano-sensory stimulation (but not thermal stimulation) but is not involved in regulation of sleep patterns. This Drosophila melanogaster (Fruit fly) protein is Neuropeptide CCHamide-1.